A 64-amino-acid polypeptide reads, in one-letter code: uncharacterized protein (64 aa).

The segment at 1–64 (MNNPNIVPPH…QNQPPQRPQY (64 aa)) is disordered. The span at 8–32 (PPHFNQHQQQNHNQNQPPHHMNNPN) shows a compositional bias: low complexity.

This is an uncharacterized protein from Dictyostelium discoideum (Social amoeba).